The primary structure comprises 46 residues: Transcriptional regulator SEHBP (46 aa).

As to quaternary structure, interacts with histone H2B. Also interacts with chromatin-binding proteins HMGN1 and HMGN3.

The protein resides in the nucleus. It localises to the cytoplasm. Plays a role in transcription regulation. The chain is Transcriptional regulator SEHBP from Homo sapiens (Human).